The following is a 271-amino-acid chain: Type III pantothenate kinase (271 aa).

An ATP-binding site is contributed by 6–13; that stretch reads DVRNTNIV. 109 to 112 contributes to the substrate binding site; sequence GADR. The Proton acceptor role is filled by Asp-111. A K(+)-binding site is contributed by Asp-131. Thr-134 lines the ATP pocket. Residue Thr-186 coordinates substrate.

Belongs to the type III pantothenate kinase family. Homodimer. Requires NH4(+) as cofactor. The cofactor is K(+).

It is found in the cytoplasm. The enzyme catalyses (R)-pantothenate + ATP = (R)-4'-phosphopantothenate + ADP + H(+). It functions in the pathway cofactor biosynthesis; coenzyme A biosynthesis; CoA from (R)-pantothenate: step 1/5. In terms of biological role, catalyzes the phosphorylation of pantothenate (Pan), the first step in CoA biosynthesis. This chain is Type III pantothenate kinase, found in Rhodococcus erythropolis (strain PR4 / NBRC 100887).